A 526-amino-acid polypeptide reads, in one-letter code: Lysine--tRNA ligase (526 aa).

Residues E431 and E438 each coordinate Mg(2+).

The protein belongs to the class-II aminoacyl-tRNA synthetase family. In terms of assembly, homodimer. The cofactor is Mg(2+).

The protein localises to the cytoplasm. It carries out the reaction tRNA(Lys) + L-lysine + ATP = L-lysyl-tRNA(Lys) + AMP + diphosphate. The sequence is that of Lysine--tRNA ligase (lysS) from Chlamydia trachomatis serovar D (strain ATCC VR-885 / DSM 19411 / UW-3/Cx).